A 114-amino-acid chain; its full sequence is MSAPKPTRSQGDLAEMLEMLLDKGVVINADIAVSIGDTELLGIELRAAVASFETAAQYGLEFPTGTDMERVEEAAGISPDESRSLDTRSESEQMDELPGEAGASVSNTAPQEEE.

Positions 63-114 (PTGTDMERVEEAAGISPDESRSLDTRSESEQMDELPGEAGASVSNTAPQEEE) are disordered. Positions 80 to 91 (DESRSLDTRSES) are enriched in basic and acidic residues. Over residues 104 to 114 (SVSNTAPQEEE) the composition is skewed to polar residues.

Belongs to the gas vesicle GvpA family. As to quaternary structure, gvpF to GvpM interact with each other in vitro, and may form multi-subunit complex(es). Interacts with GvpA.

The protein resides in the gas vesicle. Its function is as follows. A minor component of the gas vesicle, proteins GvpF to GvpM might be involved in nucleating gas vesicle formation. Gas vesicles are hollow, gas filled proteinaceous nanostructures found in some microorganisms. They allow positioning of halobacteria at the optimal depth for growth in the poorly aerated, shallow brine pools of their habitat. Expression of a 9.5 kb mc-vac DNA fragment containing 2 divergently transcribed regions (gvpD-gvpE-gvpF-gvpG-gvpH-gvpI-gvpJ-gvpK-gvpL-gvpM and gvpA-gvpC-gvpN-gvpO) allows H.volcanii to produce gas vesicles. This chain is Gas vesicle protein J, found in Haloferax mediterranei (strain ATCC 33500 / DSM 1411 / JCM 8866 / NBRC 14739 / NCIMB 2177 / R-4) (Halobacterium mediterranei).